A 66-amino-acid polypeptide reads, in one-letter code: MPKMKTHRGAAKRFKKTGSGKLKYDRAYGSHLFANKSTKQKRHLRKANIVSSGDFKRIKSLLVYMK.

It belongs to the bacterial ribosomal protein bL35 family.

The chain is Large ribosomal subunit protein bL35 from Lysinibacillus sphaericus (strain C3-41).